A 296-amino-acid polypeptide reads, in one-letter code: Glycine N-acyltransferase (296 aa).

Lysine 16, lysine 127, and lysine 141 each carry N6-acetyllysine; alternate. N6-succinyllysine; alternate is present on residues lysine 16, lysine 127, and lysine 141. Lysine 159 is subject to N6-acetyllysine. Residue lysine 169 is modified to N6-succinyllysine. Residues lysine 183 and lysine 256 each carry the N6-acetyllysine; alternate modification. Residues lysine 183 and lysine 256 each carry the N6-succinyllysine; alternate modification.

The protein belongs to the glycine N-acyltransferase family.

Its subcellular location is the mitochondrion. It catalyses the reaction an acyl-CoA + glycine = an N-acylglycine + CoA + H(+). The enzyme catalyses benzoyl-CoA + glycine = N-benzoylglycine + CoA + H(+). Its function is as follows. Mitochondrial acyltransferase which transfers an acyl group to the N-terminus of glycine and glutamine, although much less efficiently. Can conjugate a multitude of substrates to form a variety of N-acylglycines, thereby detoxify xenobiotics, such as benzoic acid or salicylic acid, and endogenous organic acids, such as isovaleric acid. The polypeptide is Glycine N-acyltransferase (GLYAT) (Pongo abelii (Sumatran orangutan)).